We begin with the raw amino-acid sequence, 338 residues long: NADPH dehydrogenase (338 aa).

23–26 (SPMC) serves as a coordination point for FMN. Residue Y28 participates in substrate binding. FMN contacts are provided by A60 and Q102. A substrate-binding site is contributed by 163–166 (HGAH). Residues R214 and 306-307 (AR) each bind FMN.

The protein belongs to the NADH:flavin oxidoreductase/NADH oxidase family. NamA subfamily. As to quaternary structure, homotetramer. The cofactor is FMN.

The catalysed reaction is A + NADPH + H(+) = AH2 + NADP(+). In terms of biological role, catalyzes the reduction of the double bond of an array of alpha,beta-unsaturated aldehydes and ketones. It also reduces the nitro group of nitroester and nitroaromatic compounds. It could have a role in detoxification processes. This chain is NADPH dehydrogenase, found in Halalkalibacterium halodurans (strain ATCC BAA-125 / DSM 18197 / FERM 7344 / JCM 9153 / C-125) (Bacillus halodurans).